Consider the following 242-residue polypeptide: Biosynthetic peptidoglycan transglycosylase (242 aa).

Residues 19–39 (ILAALAVFWGGGIALFSVVPV) form a helical membrane-spanning segment.

Belongs to the glycosyltransferase 51 family.

The protein localises to the cell inner membrane. It catalyses the reaction [GlcNAc-(1-&gt;4)-Mur2Ac(oyl-L-Ala-gamma-D-Glu-L-Lys-D-Ala-D-Ala)](n)-di-trans,octa-cis-undecaprenyl diphosphate + beta-D-GlcNAc-(1-&gt;4)-Mur2Ac(oyl-L-Ala-gamma-D-Glu-L-Lys-D-Ala-D-Ala)-di-trans,octa-cis-undecaprenyl diphosphate = [GlcNAc-(1-&gt;4)-Mur2Ac(oyl-L-Ala-gamma-D-Glu-L-Lys-D-Ala-D-Ala)](n+1)-di-trans,octa-cis-undecaprenyl diphosphate + di-trans,octa-cis-undecaprenyl diphosphate + H(+). It participates in cell wall biogenesis; peptidoglycan biosynthesis. In terms of biological role, peptidoglycan polymerase that catalyzes glycan chain elongation from lipid-linked precursors. This is Biosynthetic peptidoglycan transglycosylase from Salmonella paratyphi A (strain ATCC 9150 / SARB42).